Reading from the N-terminus, the 183-residue chain is MTTASPSQVRQNYHQDSEAAINRQINLELYASYVYLSMSYYFDRDDVALKNFAKYFLHQSHEEREHAEKLMKLQNQRGGRIFLQDIKKPDRDDWENGLNAMECALHLEKSVNQSLLELHKLATDKNDPHLCDFIETHYLNEQVKSIKELGDHVTNLRKMGTPESGMAEYLFDKHTLGNSDSES.

N-acetylmethionine is present on M1. Residue T2 is modified to N-acetylthreonine; in Ferritin heavy chain, N-terminally processed. Positions 11–160 (QNYHQDSEAA…DHVTNLRKMG (150 aa)) constitute a Ferritin-like diiron domain. Residues E28, E63, H66, E108, and Q142 each coordinate Fe cation. S179 and S183 each carry phosphoserine.

It belongs to the ferritin family. In terms of assembly, oligomer of 24 subunits. There are two types of subunits: L (light) chain and H (heavy) chain. The major chain can be light or heavy, depending on the species and tissue type. The functional molecule forms a roughly spherical shell with a diameter of 12 nm and contains a central cavity into which the insoluble mineral iron core is deposited. Interacts with NCOA4; NCOA4 promotes targeting of the iron-binding ferritin complex to autolysosomes following starvation or iron depletion.

It localises to the cytoplasm. It is found in the lysosome. Its subcellular location is the cytoplasmic vesicle. The protein localises to the autophagosome. The catalysed reaction is 4 Fe(2+) + O2 + 4 H(+) = 4 Fe(3+) + 2 H2O. Its function is as follows. Stores iron in a soluble, non-toxic, readily available form. Important for iron homeostasis. Has ferroxidase activity. Iron is taken up in the ferrous form and deposited as ferric hydroxides after oxidation. Also plays a role in delivery of iron to cells. Mediates iron uptake in capsule cells of the developing kidney. Delivery to lysosomes is mediated by the cargo receptor NCOA4 for autophagic degradation and release of iron. This Felis catus (Cat) protein is Ferritin heavy chain (FTH1).